The chain runs to 247 residues: uncharacterized protein (247 aa).

It belongs to the AIM2 family.

It is found in the cytoplasm. Its subcellular location is the nucleus. This is an uncharacterized protein from Schizosaccharomyces pombe (strain 972 / ATCC 24843) (Fission yeast).